A 458-amino-acid polypeptide reads, in one-letter code: Elongation factor 1-alpha (458 aa).

Residue G2 is modified to N,N,N-trimethylglycine. K3 carries the N6,N6-dimethyllysine; alternate modification. Residue K3 is modified to N6-methyllysine; alternate. The region spanning 5-240 (KTHVNVVVIG…DAIEPPVRPT (236 aa)) is the tr-type G domain. The segment at 14–21 (GHVDSGKS) is G1. 14–21 (GHVDSGKS) contacts GTP. K30 bears the N6-methyllysine mark. A G2 region spans residues 70 to 74 (GITID). The residue at position 79 (K79) is an N6,N6,N6-trimethyllysine. The tract at residues 91-94 (DAPG) is G3. GTP is bound by residues 91-95 (DAPGH) and 153-156 (NKMD). A G4 region spans residues 153–156 (NKMD). The interval 192–194 (SGW) is G5. K316 carries the post-translational modification N6,N6-dimethyllysine; alternate. At K316 the chain carries N6-methyllysine; alternate. K390 bears the N6-methyllysine mark.

It belongs to the TRAFAC class translation factor GTPase superfamily. Classic translation factor GTPase family. EF-Tu/EF-1A subfamily.

Its subcellular location is the cytoplasm. Its function is as follows. This protein promotes the GTP-dependent binding of aminoacyl-tRNA to the A-site of ribosomes during protein biosynthesis. This Eremothecium gossypii (strain ATCC 10895 / CBS 109.51 / FGSC 9923 / NRRL Y-1056) (Yeast) protein is Elongation factor 1-alpha (TEF).